The chain runs to 514 residues: Beta-secretase 2 (514 aa).

An N-terminal signal peptide occupies residues 1–20; sequence MGALLRALLLPLLAQWLLRA. Residues 21–62 constitute a propeptide that is removed on maturation; it reads VPVLAPAPFTLPLQVAGAANHRASTVPGLGTPELPRADGLAL. Residues 21–469 are Extracellular-facing; it reads VPVLAPAPFT…NEPILWIVSY (449 aa). A Peptidase A1 domain is found at 88 to 425; it reads YYLEMLIGTP…DRAQRRVGFA (338 aa). Residue D106 is part of the active site. N166 carries N-linked (GlcNAc...) asparagine glycosylation. Disulfide bonds link C229-C429, C288-C453, and C340-C389. The active site involves D299. An N-linked (GlcNAc...) asparagine glycan is attached at N362. A helical transmembrane segment spans residues 470–490; that stretch reads ALMSVCGAILLVLILLLLFPL. The Cytoplasmic portion of the chain corresponds to 491 to 514; the sequence is HCRHAPRDPEVVNDESSLVRHRWK.

This sequence belongs to the peptidase A1 family. Monomer. Interacts with RTN3 and RTN4. Post-translationally, undergoes autoproteolytic cleavage. Glycosylated.

It localises to the cell membrane. The protein resides in the golgi apparatus. It is found in the endoplasmic reticulum. Its subcellular location is the endosome. The protein localises to the melanosome. The catalysed reaction is Broad endopeptidase specificity. Cleaves Glu-Val-Asn-Leu-|-Asp-Ala-Glu-Phe in the Swedish variant of Alzheimer's amyloid precursor protein.. Responsible for the proteolytic processing of the amyloid precursor protein (APP). Cleaves APP, between residues 690 and 691, leading to the generation and extracellular release of beta-cleaved soluble APP, and a corresponding cell-associated C-terminal fragment which is later released by gamma-secretase. It has also been shown that it can cleave APP between residues 671 and 672. Involved in the proteolytic shedding of PMEL at early stages of melanosome biogenesis. Cleaves PMEL within the M-beta fragment to release the amyloidogenic PMEL luminal fragment containing M-alpha and a small portion of M-beta N-terminus. This is a prerequisite step for subsequent processing and assembly of PMEL fibrils into amyloid sheets. Responsible also for the proteolytic processing of CLTRN in pancreatic beta cells. The chain is Beta-secretase 2 (Bace2) from Rattus norvegicus (Rat).